A 106-amino-acid polypeptide reads, in one-letter code: MICOS complex subunit MIC12 (106 aa).

A helical transmembrane segment spans residues 11 to 27 (VKWTLSVGVIGSVFYLY).

It belongs to the MICOS complex subunit Mic12 family. As to quaternary structure, component of the mitochondrial contact site and cristae organizing system (MICOS) complex.

It localises to the mitochondrion inner membrane. Functionally, component of the MICOS complex, a large protein complex of the mitochondrial inner membrane that plays crucial roles in the maintenance of crista junctions, inner membrane architecture, and formation of contact sites to the outer membrane. This chain is MICOS complex subunit MIC12 (AIM5), found in Saccharomyces cerevisiae (strain RM11-1a) (Baker's yeast).